Here is a 390-residue protein sequence, read N- to C-terminus: NADH-quinone oxidoreductase subunit D (390 aa).

This sequence belongs to the complex I 49 kDa subunit family. NDH-1 is composed of 14 different subunits. Subunits NuoB, C, D, E, F, and G constitute the peripheral sector of the complex.

The protein localises to the cell inner membrane. The enzyme catalyses a quinone + NADH + 5 H(+)(in) = a quinol + NAD(+) + 4 H(+)(out). NDH-1 shuttles electrons from NADH, via FMN and iron-sulfur (Fe-S) centers, to quinones in the respiratory chain. The immediate electron acceptor for the enzyme in this species is believed to be ubiquinone. Couples the redox reaction to proton translocation (for every two electrons transferred, four hydrogen ions are translocated across the cytoplasmic membrane), and thus conserves the redox energy in a proton gradient. This is NADH-quinone oxidoreductase subunit D from Geobacter sulfurreducens (strain ATCC 51573 / DSM 12127 / PCA).